Reading from the N-terminus, the 122-residue chain is Large ribosomal subunit protein uL14 (122 aa).

This sequence belongs to the universal ribosomal protein uL14 family. Part of the 50S ribosomal subunit. Forms a cluster with proteins L3 and L19. In the 70S ribosome, L14 and L19 interact and together make contacts with the 16S rRNA in bridges B5 and B8.

Its function is as follows. Binds to 23S rRNA. Forms part of two intersubunit bridges in the 70S ribosome. The chain is Large ribosomal subunit protein uL14 from Halothermothrix orenii (strain H 168 / OCM 544 / DSM 9562).